The chain runs to 93 residues: UPF0358 protein lwe1048 (93 aa).

The protein belongs to the UPF0358 family.

This Listeria welshimeri serovar 6b (strain ATCC 35897 / DSM 20650 / CCUG 15529 / CIP 8149 / NCTC 11857 / SLCC 5334 / V8) protein is UPF0358 protein lwe1048.